An 84-amino-acid chain; its full sequence is Toxin Tf2 (84 aa).

An N-terminal signal peptide occupies residues 1-20 (MKRFLLFISILMMIGTIVVG). Positions 21-83 (KEGYAMDHEG…VWDYATNKCG (63 aa)) constitute an LCN-type CS-alpha/beta domain. 4 cysteine pairs are disulfide-bonded: C31–C82, C35–C58, C43–C63, and C47–C65. At C82 the chain carries Cysteine amide.

Belongs to the long (4 C-C) scorpion toxin superfamily. Sodium channel inhibitor family. Beta subfamily. In terms of processing, contains 4 disulfide bonds. In terms of tissue distribution, expressed by the venom gland.

The protein localises to the secreted. In terms of biological role, beta toxins bind voltage-independently at site-4 of sodium channels (Nav) and shift the voltage of activation toward more negative potentials thereby affecting sodium channel activation and promoting spontaneous and repetitive firing. This toxin is active against hNav1.3/SCN3A. This chain is Toxin Tf2, found in Tityus fasciolatus (Central Brazilian scorpion).